Here is a 900-residue protein sequence, read N- to C-terminus: 3'-5' exonuclease DinG (900 aa).

The region spanning 8–161 (VVDLETTGNQ…DEDATTTALL (154 aa)) is the Exonuclease domain. The 256-residue stretch at 241-496 (SEVVKSLNLT…KAIDKLEQQR (256 aa)) folds into the Helicase ATP-binding domain. Residue 276 to 283 (APLGSGKS) participates in ATP binding. The DEAH box signature appears at 448–451 (DEAH). Positions 713-893 (DYIQEYVTIT…QFSKLVNKIQ (181 aa)) constitute a Helicase C-terminal domain.

This sequence belongs to the helicase family. DinG subfamily. Type 2 sub-subfamily.

Functionally, 3'-5' exonuclease. In Staphylococcus haemolyticus (strain JCSC1435), this protein is 3'-5' exonuclease DinG.